Reading from the N-terminus, the 356-residue chain is Peptide chain release factor 1 (356 aa).

Q233 is modified (N5-methylglutamine).

It belongs to the prokaryotic/mitochondrial release factor family. Methylated by PrmC. Methylation increases the termination efficiency of RF1.

It localises to the cytoplasm. Functionally, peptide chain release factor 1 directs the termination of translation in response to the peptide chain termination codons UAG and UAA. This is Peptide chain release factor 1 (prfA) from Bacillus subtilis (strain 168).